The chain runs to 61 residues: DGYILMRNGCKIPCLFGNDGCNKECKAYGGSYGYCWTYGLACACEGQPEDKKHLNYHKKTC.

An LCN-type CS-alpha/beta domain is found at 1-61 (DGYILMRNGC…KHLNYHKKTC (61 aa)). 4 cysteine pairs are disulfide-bonded: cysteine 10–cysteine 61, cysteine 14–cysteine 35, cysteine 21–cysteine 42, and cysteine 25–cysteine 44.

This sequence belongs to the long (4 C-C) scorpion toxin superfamily. Sodium channel inhibitor family. Beta subfamily. Expressed by the venom gland.

It is found in the secreted. Functionally, depressant insect beta-toxins cause a transient contraction paralysis followed by a slow flaccid paralysis. They bind voltage-independently at site-4 of sodium channels (Nav) and shift the voltage of activation toward more negative potentials thereby affecting sodium channel activation and promoting spontaneous and repetitive firing. This toxin is active only on insects and causes a transient contraction paralysis followed by a slow flaccid paralysis. This chain is Insect toxin BsIT1, found in Hottentotta tamulus sindicus (Scorpion).